Reading from the N-terminus, the 275-residue chain is Large ribosomal subunit protein uL2 (275 aa).

Residues 210 to 275 (GRNRHRGIRP…DKLIISRKKK (66 aa)) form a disordered region. The segment covering 257-275 (FKTRKKKASDKLIISRKKK) has biased composition (basic residues).

Belongs to the universal ribosomal protein uL2 family. In terms of assembly, part of the 50S ribosomal subunit. Forms a bridge to the 30S subunit in the 70S ribosome.

Its function is as follows. One of the primary rRNA binding proteins. Required for association of the 30S and 50S subunits to form the 70S ribosome, for tRNA binding and peptide bond formation. It has been suggested to have peptidyltransferase activity; this is somewhat controversial. Makes several contacts with the 16S rRNA in the 70S ribosome. The chain is Large ribosomal subunit protein uL2 from Helicobacter hepaticus (strain ATCC 51449 / 3B1).